A 534-amino-acid polypeptide reads, in one-letter code: Arginine transporter 1 (534 aa).

The next 6 helical transmembrane spans lie at 35 to 55, 99 to 119, 126 to 146, 154 to 174, 182 to 202, and 216 to 236; these read YVLLVIYMIYALLTSSVYFGW, SLFTIAMACHFTCSAVAGYLL, AVALLGQTFNALAWILLAFSG, PAFVFMGAGADVSVYPTLLIV, ALIMATLGACISLSFFVPLVL, and VCIGYAVAGPILCAVVAFFFI. Residue Asn-246 is glycosylated (N-linked (GlcNAc...) asparagine). Residues 261-302 are disordered; the sequence is TAQSSPKAVDSPPCDEGASSRGRLAVSHNTERTAPDDEQEKD. Residues 289–302 show a composition bias toward basic and acidic residues; sequence NTERTAPDDEQEKD. The next 6 membrane-spanning stretches (helical) occupy residues 329 to 349, 365 to 385, 388 to 408, 419 to 439, 451 to 471, and 483 to 503; these read AFTFLYFGICLYFTVCGWVMA, YTLEILTPLSTIPCLLFGVVI, IGIMPVILMLNTIGLLTYVCV, FSVIFFFMYISIFTTQMYVFV, LIGVASLIGGLLSLISNVLYG, and RPVVIALLAVIILMYPILLAM.

The protein belongs to the SLC43A transporter (TC 2.A.1.44) family.

Its subcellular location is the cell membrane. It carries out the reaction L-arginine(in) = L-arginine(out). In terms of biological role, selective L-arginine transporter that is essential for parasite survival and virulence. Does not require other inorganic ions such as sodium, chloride, potassium or calcium. This is Arginine transporter 1 from Toxoplasma gondii (strain ATCC 50611 / Me49).